The following is a 514-amino-acid chain: Cholesterol side-chain cleavage enzyme, mitochondrial (514 aa).

A mitochondrion-targeting transit peptide spans 1–39; the sequence is MMVSWSVCRSSLALPACGLPSARHNSSMPVVRQALSPDN. A heme-binding site is contributed by Cys458.

The protein belongs to the cytochrome P450 family. Heme is required as a cofactor. In terms of tissue distribution, in the ovary, not found in early vitellogenic follicles, barely detected in postvitellogenic follicles and abundant in post-ovulatory follicles.

Its subcellular location is the mitochondrion inner membrane. It catalyses the reaction 6 reduced [adrenodoxin] + cholesterol + 3 O2 + 6 H(+) = 4-methylpentanal + pregnenolone + 6 oxidized [adrenodoxin] + 4 H2O. It functions in the pathway lipid metabolism; C21-steroid hormone metabolism. Functionally, catalyzes the side-chain cleavage reaction of cholesterol to pregnenolone, the precursor of most steroid hormones. This chain is Cholesterol side-chain cleavage enzyme, mitochondrial (cyp11a1), found in Oncorhynchus mykiss (Rainbow trout).